The primary structure comprises 594 residues: Glutamate decarboxylase 1 (594 aa).

The segment covering 1-13 has biased composition (low complexity); it reads MASSTPSSSATSS. Residues 1–23 form a disordered region; sequence MASSTPSSSATSSNAGADPNTTN. S78 carries the post-translational modification Phosphoserine. 190–192 contacts 4-aminobutanoate; the sequence is QLS. At K405 the chain carries N6-(pyridoxal phosphate)lysine. R567 lines the 4-aminobutanoate pocket.

It belongs to the group II decarboxylase family. As to quaternary structure, homodimer. Pyridoxal 5'-phosphate is required as a cofactor.

It catalyses the reaction L-glutamate + H(+) = 4-aminobutanoate + CO2. Its function is as follows. Catalyzes the synthesis of the inhibitory neurotransmitter gamma-aminobutyric acid (GABA) with pyridoxal 5'-phosphate as cofactor. This Felis catus (Cat) protein is Glutamate decarboxylase 1 (GAD1).